We begin with the raw amino-acid sequence, 190 residues long: Putative manganese efflux pump MntP (190 aa).

6 consecutive transmembrane segments (helical) span residues 3-23 (PISL…AALG), 41-61 (LIFG…GQVA), 69-89 (DHWI…YNGI), 105-125 (FWIL…VGVG), 133-153 (IVVA…IGVM), and 168-188 (IIGG…HLSA).

This sequence belongs to the MntP (TC 9.B.29) family.

Its subcellular location is the cell inner membrane. Functionally, probably functions as a manganese efflux pump. This is Putative manganese efflux pump MntP from Pseudomonas syringae pv. syringae (strain B728a).